A 262-amino-acid chain; its full sequence is Acyl-[acyl-carrier-protein]--UDP-N-acetylglucosamine O-acyltransferase (262 aa).

It belongs to the transferase hexapeptide repeat family. LpxA subfamily. In terms of assembly, homotrimer.

The protein resides in the cytoplasm. It catalyses the reaction a (3R)-hydroxyacyl-[ACP] + UDP-N-acetyl-alpha-D-glucosamine = a UDP-3-O-[(3R)-3-hydroxyacyl]-N-acetyl-alpha-D-glucosamine + holo-[ACP]. It participates in glycolipid biosynthesis; lipid IV(A) biosynthesis; lipid IV(A) from (3R)-3-hydroxytetradecanoyl-[acyl-carrier-protein] and UDP-N-acetyl-alpha-D-glucosamine: step 1/6. In terms of biological role, involved in the biosynthesis of lipid A, a phosphorylated glycolipid that anchors the lipopolysaccharide to the outer membrane of the cell. In Shigella boydii serotype 18 (strain CDC 3083-94 / BS512), this protein is Acyl-[acyl-carrier-protein]--UDP-N-acetylglucosamine O-acyltransferase.